The chain runs to 215 residues: Ceramide-1-phosphate transfer protein (215 aa).

Positions 57, 61, 107, 111, and 151 each coordinate an N-acylsphingoid base 1-phosphate.

This sequence belongs to the GLTP family.

Its subcellular location is the cytoplasm. It is found in the cytosol. It localises to the golgi apparatus. The protein localises to the trans-Golgi network membrane. The protein resides in the cell membrane. Its subcellular location is the endosome membrane. It is found in the nucleus outer membrane. It carries out the reaction N-(hexadecanoyl)-sphing-4-enine-1-phosphate(in) = N-(hexadecanoyl)-sphing-4-enine-1-phosphate(out). The enzyme catalyses N-(9Z-octadecenoyl)-sphing-4-enine-1-phosphate(in) = N-(9Z-octadecenoyl)-sphing-4-enine-1-phosphate(out). Its function is as follows. Mediates the intracellular transfer of ceramide-1-phosphate (C1P) between organelle membranes and the cell membrane. Required for normal structure of the Golgi stacks. Can bind phosphoceramides with a variety of aliphatic chains, but has a preference for lipids with saturated C16:0 or monounsaturated C18:1 aliphatic chains, and is inefficient with phosphoceramides containing lignoceryl (C24:0). Plays a role in the regulation of the cellular levels of ceramide-1-phosphate, and thereby contributes to the regulation of phospholipase PLA2G4A activity and the release of arachidonic acid. Has no activity with galactosylceramide, lactosylceramide, sphingomyelin, phosphatidylcholine, phosphatidic acid and ceramide. C1P transfer is stimulated by phosphatidylserine in C1P source vesicles. Regulates autophagy and pyroptosis, but not apoptosis. The protein is Ceramide-1-phosphate transfer protein (cptp) of Xenopus tropicalis (Western clawed frog).